A 271-amino-acid polypeptide reads, in one-letter code: Structure-specific endonuclease subunit slx1 (271 aa).

The GIY-YIG domain maps to 5 to 87 (NFYCCYLLKS…QNLGISRYTK (83 aa)). An SLX1-type zinc finger spans residues 180–231 (CNLCYECIESDELRANCPFTDCNSINHLTCLASSFLTEECQVLPIEGMCTKC).

The protein belongs to the SLX1 family. As to quaternary structure, forms a heterodimer with slx4. Requires Mg(2+) as cofactor. Mn(2+) is required as a cofactor.

It localises to the nucleus. The protein localises to the nucleolus. In terms of biological role, catalytic subunit of the slx1-slx4 structure-specific endonuclease that resolves DNA secondary structures generated during DNA repair and recombination. Has endonuclease activity towards branched DNA substrates, introducing single-strand cuts in duplex DNA close to junctions with ss-DNA. Has a preference for stem-loop (SL) and splayed arm Y structures. Introduces a single-strand cut in duplex DNA on the 3' side of a double-strand/single-strand junction with respect to the single-strand moving 3' to 5' away from the junction. Plays a critical role in maintaining the integrity of the ribosomal DNA (rDNA) loci, where it has a role in re-starting stalled replication forks. The complex initiates homologous recombination (HR) events, used to maintain rDNA copy number, in the rDNA repeats that are processed by a mechanism that requires rad22, but not rhp51. It is also required for suppression of methyl methanesulfonate (MMS) and UV-C irradiation hypersensitivity of the structural maintenance of chromosome (SMC) protein mutant, smc6-74, by overexpression of brc1. Has Holliday junction resolvase activity in vitro. The polypeptide is Structure-specific endonuclease subunit slx1 (Schizosaccharomyces pombe (strain 972 / ATCC 24843) (Fission yeast)).